Consider the following 284-residue polypeptide: Bifunctional protein FolD 2 (284 aa).

NADP(+) is bound by residues 165-167 (GRG), T192, and V233.

This sequence belongs to the tetrahydrofolate dehydrogenase/cyclohydrolase family. As to quaternary structure, homodimer.

It carries out the reaction (6R)-5,10-methylene-5,6,7,8-tetrahydrofolate + NADP(+) = (6R)-5,10-methenyltetrahydrofolate + NADPH. The catalysed reaction is (6R)-5,10-methenyltetrahydrofolate + H2O = (6R)-10-formyltetrahydrofolate + H(+). It functions in the pathway one-carbon metabolism; tetrahydrofolate interconversion. Its function is as follows. Catalyzes the oxidation of 5,10-methylenetetrahydrofolate to 5,10-methenyltetrahydrofolate and then the hydrolysis of 5,10-methenyltetrahydrofolate to 10-formyltetrahydrofolate. The protein is Bifunctional protein FolD 2 of Streptomyces avermitilis (strain ATCC 31267 / DSM 46492 / JCM 5070 / NBRC 14893 / NCIMB 12804 / NRRL 8165 / MA-4680).